A 270-amino-acid polypeptide reads, in one-letter code: Hydroxyethylthiazole kinase (270 aa).

M47 serves as a coordination point for substrate. ATP contacts are provided by R123 and S170. Residue G197 coordinates substrate.

This sequence belongs to the Thz kinase family. Mg(2+) is required as a cofactor.

The catalysed reaction is 5-(2-hydroxyethyl)-4-methylthiazole + ATP = 4-methyl-5-(2-phosphooxyethyl)-thiazole + ADP + H(+). It functions in the pathway cofactor biosynthesis; thiamine diphosphate biosynthesis; 4-methyl-5-(2-phosphoethyl)-thiazole from 5-(2-hydroxyethyl)-4-methylthiazole: step 1/1. In terms of biological role, catalyzes the phosphorylation of the hydroxyl group of 4-methyl-5-beta-hydroxyethylthiazole (THZ). The polypeptide is Hydroxyethylthiazole kinase (Syntrophus aciditrophicus (strain SB)).